A 671-amino-acid polypeptide reads, in one-letter code: MAVEQIDKMAAKAGEATNKWIKPQQPLLTLLLLLATFSQLPAVCSSSILDAASLQEKDPLRDTSMNMIQRNYMVMHSASGSGDHSRSLKRANLANTSITCNDGSHAGFYLRKHPSSKKWIVLLEGGWHCFDVRSCRSRWMRLRHLMTSSQWPETRDVGGILSPHPEENPYWHNANHVLIPYCSSDSWSGTRTEPDTSDRENSWRFMGALILRQVIAELIPVGLGRVPGGELMLVGSSAGGMGVMLNLDRIRDFLVNEKKLQITVRGVSDSGWFLDREPYTPAAVASNEAVRQGWKLWQGLLPEECTKSYPTEPWRCYYGYRLYPTLKTPLFVFQWLFDEAQMRVDNVGAPVTPQQWNYIHEMGGALRSSLDNVSAVFAPSCIGHGVLFKRDWVNIKIDDISLPSALRCWEHSTRSRRHDKLKRSTEPSTAVSHPEHANNQRHQRHRQRLQRQKHNNVAQSGGQQRKHNHLSKEEREERKRLRQEQRQRRKQRRRQQQQKKANGGQEHRNKKDNSPKSSNGNDQRKQRRRQQLTAEERQEQRKRRRKAQQQQMKMQREQPAAGVFLEASAPQKTRSSNNASAGTKSKKRHRVPRVPEKCGLRLLERCSWPQCNHSCPTLTNPMTGEEMRFLELLTAFGLDIEAVAAALGVDMHTLNNMERTELVNMLTQQAN.

The N-terminal stretch at 1 to 46 (MAVEQIDKMAAKAGEATNKWIKPQQPLLTLLLLLATFSQLPAVCSS) is a signal peptide. Asn-95 is a glycosylation site (N-linked (GlcNAc...) asparagine). Catalysis depends on charge relay system residues Ser-237 and Asp-338. An N-linked (GlcNAc...) asparagine glycan is attached at Asn-372. Residue His-384 is the Charge relay system of the active site. Positions 411–592 (HSTRSRRHDK…TKSKKRHRVP (182 aa)) are disordered. A compositionally biased stretch (basic residues) spans 439–454 (NQRHQRHRQRLQRQKH). Over residues 470–486 (LSKEEREERKRLRQEQR) the composition is skewed to basic and acidic residues. The segment covering 487-497 (QRRKQRRRQQQ) has biased composition (basic residues). A compositionally biased stretch (basic and acidic residues) spans 505 to 514 (QEHRNKKDNS). The segment covering 570–583 (PQKTRSSNNASAGT) has biased composition (polar residues). Residues Asn-578 and Asn-612 are each glycosylated (N-linked (GlcNAc...) asparagine).

It belongs to the pectinacetylesterase family. Notum subfamily.

Its subcellular location is the secreted. It localises to the cell surface. It catalyses the reaction [Wnt protein]-O-(9Z)-hexadecenoyl-L-serine + H2O = [Wnt protein]-L-serine + (9Z)-hexadecenoate + H(+). Functionally, carboxylesterase that acts as a key negative regulator of the Wnt signaling pathway by specifically mediating depalmitoleoylation of WNT proteins. Serine palmitoleoylation of WNT proteins is required for efficient binding to frizzled receptors. Also acts as a regulator of long-range activity of Hedgehog (hh), possibly by regulating the switch between low and high level hh pathway signaling. The sequence is that of Palmitoleoyl-protein carboxylesterase NOTUM from Drosophila melanogaster (Fruit fly).